The chain runs to 331 residues: tRNA (guanine-N(7)-)-methyltransferase (331 aa).

S-adenosyl-L-methionine contacts are provided by Glu29, Glu55, and Asp105. Asp105 is an active-site residue. Substrate contacts are provided by Lys109 and Asp141.

It belongs to the class I-like SAM-binding methyltransferase superfamily. TrmB family.

It carries out the reaction guanosine(46) in tRNA + S-adenosyl-L-methionine = N(7)-methylguanosine(46) in tRNA + S-adenosyl-L-homocysteine. It participates in tRNA modification; N(7)-methylguanine-tRNA biosynthesis. In terms of biological role, catalyzes the formation of N(7)-methylguanine at position 46 (m7G46) in tRNA. In Deinococcus geothermalis (strain DSM 11300 / CIP 105573 / AG-3a), this protein is tRNA (guanine-N(7)-)-methyltransferase.